The primary structure comprises 701 residues: Aryl hydrocarbon receptor repressor (701 aa).

The tract at residues methionine 1–arginine 38 is disordered. Positions glycine 12 to leucine 24 are enriched in basic residues. Residues threonine 25–lysine 78 form the bHLH domain. The PAS domain maps to proline 106–proline 176. 2 disordered regions span residues aspartate 360 to methionine 389 and threonine 409 to histidine 436. Residues serine 365–histidine 375 are compositionally biased toward basic and acidic residues. The span at glutamine 414–serine 430 shows a compositional bias: polar residues. The interval alanine 555–proline 701 is needed for transcriptional repression. Glycyl lysine isopeptide (Lys-Gly) (interchain with G-Cter in SUMO2) cross-links involve residues lysine 583 and lysine 660.

As to quaternary structure, interacts with ARNT, ANKRA2, HDAC4 and HDAC5. Interacts with ARNT; forms a heterodimer with ARNT. In terms of tissue distribution, highly expressed in testis and weakly expressed in heart and liver. Highly expressed in small intestine and cecum in a male-dominant sexual dimorphic fashion.

The protein localises to the cytoplasm. It is found in the nucleus. In terms of biological role, mediates dioxin toxicity and is involved in regulation of cell growth and differentiation. Represses the transcription activity of AHR by competing with this transcription factor for heterodimer formation with the ARNT and subsequently binding to the xenobiotic response element (XRE) sequence present in the promoter regulatory region of variety of genes. Represses CYP1A1 by binding the XRE sequence and recruiting ANKRA2, HDAC4 and/or HDAC5. Autoregulates its expression by associating with its own XRE site. In Rattus norvegicus (Rat), this protein is Aryl hydrocarbon receptor repressor (Ahrr).